The primary structure comprises 203 residues: MIGRLRGIIIEKQPPLVLIEVGGVGYEVHMPMTCFYELPEAGQEAIVFTHFVVREDAQLLYGFNNKQERTLFKELIKTNGVGPKLALAILSGMSAQQFVNAVEREEVGPLVKLPGIGKKTAERLIVEMKDRFKGLHGDLFTPAADLVLTSPASPATDDAEQEAVAALVALGYKPQEASRMVSKIARPDTSSETLIREALRAAL.

A domain I region spans residues 1–64 (MIGRLRGIII…EDAQLLYGFN (64 aa)). The tract at residues 65 to 142 (NKQERTLFKE…KGLHGDLFTP (78 aa)) is domain II. The segment at 143–154 (AADLVLTSPASP) is flexible linker. The segment at 155–203 (ATDDAEQEAVAALVALGYKPQEASRMVSKIARPDTSSETLIREALRAAL) is domain III.

It belongs to the RuvA family. As to quaternary structure, homotetramer. Forms an RuvA(8)-RuvB(12)-Holliday junction (HJ) complex. HJ DNA is sandwiched between 2 RuvA tetramers; dsDNA enters through RuvA and exits via RuvB. An RuvB hexamer assembles on each DNA strand where it exits the tetramer. Each RuvB hexamer is contacted by two RuvA subunits (via domain III) on 2 adjacent RuvB subunits; this complex drives branch migration. In the full resolvosome a probable DNA-RuvA(4)-RuvB(12)-RuvC(2) complex forms which resolves the HJ.

It localises to the cytoplasm. The RuvA-RuvB-RuvC complex processes Holliday junction (HJ) DNA during genetic recombination and DNA repair, while the RuvA-RuvB complex plays an important role in the rescue of blocked DNA replication forks via replication fork reversal (RFR). RuvA specifically binds to HJ cruciform DNA, conferring on it an open structure. The RuvB hexamer acts as an ATP-dependent pump, pulling dsDNA into and through the RuvAB complex. HJ branch migration allows RuvC to scan DNA until it finds its consensus sequence, where it cleaves and resolves the cruciform DNA. The protein is Holliday junction branch migration complex subunit RuvA of Shigella flexneri serotype 5b (strain 8401).